A 227-amino-acid chain; its full sequence is NADH-quinone oxidoreductase subunit C (227 aa).

The protein belongs to the complex I 30 kDa subunit family. In terms of assembly, NDH-1 is composed of 14 different subunits. Subunits NuoB, C, D, E, F, and G constitute the peripheral sector of the complex.

Its subcellular location is the cell inner membrane. It catalyses the reaction a quinone + NADH + 5 H(+)(in) = a quinol + NAD(+) + 4 H(+)(out). Its function is as follows. NDH-1 shuttles electrons from NADH, via FMN and iron-sulfur (Fe-S) centers, to quinones in the respiratory chain. The immediate electron acceptor for the enzyme in this species is believed to be ubiquinone. Couples the redox reaction to proton translocation (for every two electrons transferred, four hydrogen ions are translocated across the cytoplasmic membrane), and thus conserves the redox energy in a proton gradient. In Legionella pneumophila (strain Paris), this protein is NADH-quinone oxidoreductase subunit C.